Reading from the N-terminus, the 469-residue chain is UDP-N-acetylmuramate--L-alanine ligase (469 aa).

119–125 (GTHGKTT) contributes to the ATP binding site.

The protein belongs to the MurCDEF family.

It localises to the cytoplasm. It carries out the reaction UDP-N-acetyl-alpha-D-muramate + L-alanine + ATP = UDP-N-acetyl-alpha-D-muramoyl-L-alanine + ADP + phosphate + H(+). Its pathway is cell wall biogenesis; peptidoglycan biosynthesis. Cell wall formation. The protein is UDP-N-acetylmuramate--L-alanine ligase of Vesicomyosocius okutanii subsp. Calyptogena okutanii (strain HA).